Consider the following 311-residue polypeptide: Olfactory receptor 10G9 (311 aa).

Residues 1–23 (MSKTSLVTAFILTGLPHAPGLDA) lie on the Extracellular side of the membrane. The helical transmembrane segment at 24 to 44 (PLFGIFLVVYVLTVLGNLLIL) threads the bilayer. Residues 45 to 52 (LVIRVDSH) lie on the Cytoplasmic side of the membrane. Residues 53–73 (LHTPMYYFLTNLSFIDMWFST) traverse the membrane as a helical segment. The Extracellular portion of the chain corresponds to 74-98 (VTVPKMLMTLVSPSGRAISFHSCVA). Cysteine 96 and cysteine 188 are disulfide-bonded. The chain crosses the membrane as a helical span at residues 99-119 (QLYFFHFLGSTECFLYTVMSY). Residues 120 to 138 (DRYLAISYPLRYTSMMSGS) lie on the Cytoplasmic side of the membrane. The chain crosses the membrane as a helical span at residues 139 to 159 (RCALLATSTWLSGSLHSAVQT). Residues 160 to 196 (ILTFHLPYCGPNQIQHYLCDAPPILKLACADTSANEM) lie on the Extracellular side of the membrane. The chain crosses the membrane as a helical span at residues 197–216 (VIFVDIGLVASGCFLLIVLS). Residues 217–236 (YVSIVCSILRIHTSEGRHRA) lie on the Cytoplasmic side of the membrane. Residues 237-257 (FQTCASHCIVVLCFFVPCVFI) traverse the membrane as a helical segment. At 258-268 (YLRPGSRDVVD) the chain is on the extracellular side. Residues 269–289 (GVVAIFYTVLTPLLNPVVYTL) traverse the membrane as a helical segment. The Cytoplasmic portion of the chain corresponds to 290 to 311 (RNKEVKKAVLKLRDKVAHSQGE).

Belongs to the G-protein coupled receptor 1 family.

Its subcellular location is the cell membrane. In terms of biological role, odorant receptor. This is Olfactory receptor 10G9 (OR10G9) from Homo sapiens (Human).